Reading from the N-terminus, the 235-residue chain is Secretory carrier-associated membrane protein 5B (235 aa).

At 1-39 (MSDKPNNFPPLPRFIPLKPCFYQDFDTDIPDVHRTTAKR) the chain is on the cytoplasmic side. A helical membrane pass occupies residues 40–60 (LYYLWMLNSITLGVNLIGCLA). At 61–67 (WLIGGGG) the chain is on the extracellular side. The helical transmembrane segment at 68–88 (ATNFGLAFLWLILFTPCSYVC) threads the bilayer. Topologically, residues 89 to 102 (WFRPIYKAFKTDSS) are cytoplasmic. Residues 103–125 (FNFMAFFFTFTGQLVISIIQAVG) form a helical membrane-spanning segment. Residues 126-148 (IPGWGVCGWIASISFFGTNVGSA) are Extracellular-facing. Residues 149-169 (VVMLIPTIMFTAVAVLSFVAL) traverse the membrane as a helical segment. Residues 170-235 (TKVHRFYRGA…TPNYGYSNQM (66 aa)) are Cytoplasmic-facing.

Belongs to the SCAMP family. SCAMP5 subfamily.

The protein localises to the cell membrane. It is found in the golgi apparatus membrane. Its subcellular location is the golgi apparatus. The protein resides in the trans-Golgi network membrane. It localises to the recycling endosome membrane. The protein localises to the cytoplasmic vesicle. It is found in the secretory vesicle. Its subcellular location is the synaptic vesicle membrane. Functionally, required for the calcium-dependent exocytosis of signal sequence-containing cytokines. Probably acts in cooperation with the SNARE machinery. This Xenopus laevis (African clawed frog) protein is Secretory carrier-associated membrane protein 5B (scamp5-b).